Consider the following 220-residue polypeptide: Heptaprenyl diphosphate synthase component 1 (220 aa).

Heterodimer of component I and II.

The enzyme catalyses 4 isopentenyl diphosphate + (2E,6E)-farnesyl diphosphate = all-trans-heptaprenyl diphosphate + 4 diphosphate. In terms of biological role, supplies heptaprenyl diphosphate, the precursor for the side chain of the isoprenoid quinone menaquinone-7 (MQ-7). In Geobacillus stearothermophilus (Bacillus stearothermophilus), this protein is Heptaprenyl diphosphate synthase component 1 (hepS).